The following is a 557-amino-acid chain: uncharacterized protein (557 aa).

A signal peptide spans 1-30 (MAPRRRRHTRIAGLRVVGTATLVAATTLTA). Residue Cys31 is the site of N-palmitoyl cysteine attachment. A lipid anchor (S-diacylglycerol cysteine) is attached at Cys31.

The protein to M.bovis Mb2616c and M.leprae ML0489.

The protein localises to the cell membrane. This is an uncharacterized protein from Mycobacterium tuberculosis (strain ATCC 25618 / H37Rv).